A 313-amino-acid chain; its full sequence is tRNA uridine(34) hydroxylase (313 aa).

One can recognise a Rhodanese domain in the interval 124–218 (SDPEVLLIDT…YLEEVPQEET (95 aa)). The Cysteine persulfide intermediate role is filled by C178.

Belongs to the TrhO family.

The enzyme catalyses uridine(34) in tRNA + AH2 + O2 = 5-hydroxyuridine(34) in tRNA + A + H2O. In terms of biological role, catalyzes oxygen-dependent 5-hydroxyuridine (ho5U) modification at position 34 in tRNAs. In Pseudomonas fluorescens (strain Pf0-1), this protein is tRNA uridine(34) hydroxylase.